Here is a 743-residue protein sequence, read N- to C-terminus: Putative pre-mRNA-splicing factor ATP-dependent RNA helicase DHX32 (743 aa).

Position 1 is an N-acetylmethionine (Met1). Residues 1–28 form a disordered region; sequence MEEEGLECPNSSSEKRYFPESLDSSDGD. Residues 72–238 enclose the Helicase ATP-binding domain; sequence MENLLQNQIV…YGNVPVIEVK (167 aa). 85 to 92 is an ATP binding site; it reads GDAKCGKS. The DEAH box motif lies at 185 to 188; the sequence is DDIH.

The protein belongs to the DEAD box helicase family. DEAH subfamily. As to expression, expressed in lymphoid tissues (at protein level). Expressed in brain, heart, skeletal muscle, colon, thymus, spleen, kidney, liver, small intestine, placenta, lung, lymphoid tissues and blood leukocytes.

The protein resides in the nucleus. The protein localises to the mitochondrion. It carries out the reaction ATP + H2O = ADP + phosphate + H(+). The chain is Putative pre-mRNA-splicing factor ATP-dependent RNA helicase DHX32 (DHX32) from Homo sapiens (Human).